The primary structure comprises 525 residues: GMP synthase [glutamine-hydrolyzing] (525 aa).

Residues 9-207 (RILILDFGSQ…VRDICQCEAL (199 aa)) enclose the Glutamine amidotransferase type-1 domain. C86 acts as the Nucleophile in catalysis. Residues H181 and E183 contribute to the active site. The GMPS ATP-PPase domain maps to 208 to 400 (WTPAKIIDDA…LGLPYDMLYR (193 aa)). 235-241 (SGGVDSS) is a binding site for ATP.

In terms of assembly, homodimer.

It carries out the reaction XMP + L-glutamine + ATP + H2O = GMP + L-glutamate + AMP + diphosphate + 2 H(+). The protein operates within purine metabolism; GMP biosynthesis; GMP from XMP (L-Gln route): step 1/1. Its function is as follows. Catalyzes the synthesis of GMP from XMP. This chain is GMP synthase [glutamine-hydrolyzing], found in Escherichia coli O17:K52:H18 (strain UMN026 / ExPEC).